The primary structure comprises 277 residues: Large ribosomal subunit protein uL2 (277 aa).

2 disordered regions span residues 1 to 58 and 223 to 277; these read MGIR…GGGH and GVVM…GKKR. Over residues 23–33 the composition is skewed to basic and acidic residues; sequence EITRSEPEKSL. The segment covering 37 to 58 has biased composition (basic residues); the sequence is LHGRGGRNAHGKITTRHKGGGH. Over residues 251–267 the composition is skewed to basic and acidic residues; sequence GKPEGRTRRNKPSDKLI. The span at 268–277 shows a compositional bias: basic residues; it reads VRRRRTGKKR.

The protein belongs to the universal ribosomal protein uL2 family. As to quaternary structure, part of the 50S ribosomal subunit. Forms a bridge to the 30S subunit in the 70S ribosome.

Its function is as follows. One of the primary rRNA binding proteins. Required for association of the 30S and 50S subunits to form the 70S ribosome, for tRNA binding and peptide bond formation. It has been suggested to have peptidyltransferase activity; this is somewhat controversial. Makes several contacts with the 16S rRNA in the 70S ribosome. This is Large ribosomal subunit protein uL2 from Saccharopolyspora erythraea (strain ATCC 11635 / DSM 40517 / JCM 4748 / NBRC 13426 / NCIMB 8594 / NRRL 2338).